The chain runs to 47 residues: Photosystem II reaction center protein K (47 aa).

The propeptide occupies 1 to 10; sequence MAAFTLDLMA. Residues 20–40 form a helical membrane-spanning segment; the sequence is APAVDVLPLIPIFFFLLVFVW.

It belongs to the PsbK family. PSII is composed of 1 copy each of membrane proteins PsbA, PsbB, PsbC, PsbD, PsbE, PsbF, PsbH, PsbI, PsbJ, PsbK, PsbL, PsbM, PsbT, PsbX, PsbY, Psb30/Ycf12, peripheral proteins PsbO, CyanoQ (PsbQ), PsbU, PsbV and a large number of cofactors. It forms dimeric complexes.

It localises to the cellular thylakoid membrane. In terms of biological role, one of the components of the core complex of photosystem II (PSII). PSII is a light-driven water:plastoquinone oxidoreductase that uses light energy to abstract electrons from H(2)O, generating O(2) and a proton gradient subsequently used for ATP formation. It consists of a core antenna complex that captures photons, and an electron transfer chain that converts photonic excitation into a charge separation. The chain is Photosystem II reaction center protein K from Prochlorococcus marinus (strain MIT 9303).